The following is a 379-amino-acid chain: MAKLGPGQGLGCEAAEGSLVPSRKREYKPCGKHTEGKRPLYAIGFNFMDARYYDVFATVGGNRVTTYRCLENGSFALLQAYVDEDKDESFYTLSWARDHVDGSPLLVAAGSNGIIRVINCATEKLAKSFVGHGDSINEIRTQPLKPSLIISASKDESVRLWNVHTGICILIFAGAGGHRNEVLSVDFHPSDIERFASCGMDNTVKIWSMKEFWLYVDKSYSWTDLPSKFPTKYVQFPVLIAAVHSNYVDCTRWLGDFILSKSVDNEIVLWEPKTKEQSPGEGSIDILQKYPVPECDIWFIKFSCDFHFNQLAIGNREGKIYVWEVQSSPPVLIARLYNQQCKSPIRQTAVSFDGSTILGAGEDGTIWRWDEVDHPSSRN.

6 WD repeats span residues 85–128 (DKDE…LAKS), 131–171 (GHGD…CILI), 177–217 (GHRN…LYVD), 243–280 (VHSN…QSPG), 292–333 (VPEC…PVLI), and 340–378 (QCKS…PSSR).

It belongs to the WD repeat ESC family. Widely expressed. Expressed in the embryo sac before pollination. After pollination, its expression persists, predominantly in the embryo and at lower levels in the endosperm.

The protein localises to the nucleus. Functionally, polycomb group (PcG) protein. PcG proteins act by forming multiprotein complexes, which are required to maintain the transcriptionally repressive state of homeotic genes throughout development. PcG proteins are not required to initiate repression, but to maintain it during later stages of development. They probably act via the methylation of histones, rendering chromatin heritably changed in its expressibility. This Zea mays (Maize) protein is Polycomb group protein FIE2 (FIE2).